The chain runs to 566 residues: Transcription factor tasR (566 aa).

The segment covering 1–30 (MISASRMEESASSSSLSDAAAPPPGAALQS) has biased composition (low complexity). The disordered stretch occupies residues 1-31 (MISASRMEESASSSSLSDAAAPPPGAALQSI). The segment at residues 35–68 (CDRCRFHKLKCNVPAAGHGGPVPCERCTRAKVPC) is a DNA-binding region (zn(2)-C6 fungal-type). Disordered regions lie at residues 72–174 (RRRR…PGQH), 346–382 (EFIVTNNPQKHLGSESSSSSSSSISNSSSNNEAGGDD), 422–453 (SESDGCGRGASRSGPNASPALRLGELPSTGTA), and 500–551 (RGVG…GLGG). Composition is skewed to low complexity over residues 89–108 (PTRRATMPSPSPTPASTSAA) and 359–378 (SESSSSSSSSISNSSSNNEA). Over residues 501–532 (GVGGGGGGGGGGGGGGGGGVGGGGGGGGGPGG) the composition is skewed to gly residues.

Its subcellular location is the nucleus. Its function is as follows. Transcription factor that regulates the expression of the gene cluster that mediates the biosynthesis of the tetramic acids Sch210971 and Sch210972, potential anti-HIV fungal natural product that contain a decalin core. The sequence is that of Transcription factor tasR from Hapsidospora irregularis.